The chain runs to 514 residues: Bifunctional purine biosynthesis protein PurH (514 aa).

The MGS-like domain occupies 1-143 (MTRRALISVS…KNHAGVLVLV (143 aa)).

This sequence belongs to the PurH family.

It catalyses the reaction (6R)-10-formyltetrahydrofolate + 5-amino-1-(5-phospho-beta-D-ribosyl)imidazole-4-carboxamide = 5-formamido-1-(5-phospho-D-ribosyl)imidazole-4-carboxamide + (6S)-5,6,7,8-tetrahydrofolate. The catalysed reaction is IMP + H2O = 5-formamido-1-(5-phospho-D-ribosyl)imidazole-4-carboxamide. It functions in the pathway purine metabolism; IMP biosynthesis via de novo pathway; 5-formamido-1-(5-phospho-D-ribosyl)imidazole-4-carboxamide from 5-amino-1-(5-phospho-D-ribosyl)imidazole-4-carboxamide (10-formyl THF route): step 1/1. It participates in purine metabolism; IMP biosynthesis via de novo pathway; IMP from 5-formamido-1-(5-phospho-D-ribosyl)imidazole-4-carboxamide: step 1/1. The protein is Bifunctional purine biosynthesis protein PurH of Deinococcus geothermalis (strain DSM 11300 / CIP 105573 / AG-3a).